The following is an 840-amino-acid chain: Sorting nexin-25 (840 aa).

In terms of domain architecture, PXA spans 1–164; sequence MDRVLRDVFD…MLLRQLEYRE (164 aa). Residues 287–401 enclose the RGS domain; that stretch reads QFEDIMTNPF…LVSDLYEKLM (115 aa). Positions 404–437 are disordered; that stretch reads EEEEEPDAQLASEKDELGSGGEAGEEAVEGTSGV. A coiled-coil region spans residues 446-494; sequence IKLRELNEKLEYKRQALSSIQNAPKPDKKIISKLKDEILLIEKECTALQ. The 121-residue stretch at 508 to 628 folds into the PX domain; that stretch reads GLWRASITSA…AFLSPSPDYL (121 aa). Phosphoserine is present on S665.

The protein belongs to the sorting nexin family.

The protein resides in the endosome membrane. Its function is as follows. May be involved in several stages of intracellular trafficking. This chain is Sorting nexin-25 (Snx25), found in Mus musculus (Mouse).